Consider the following 330-residue polypeptide: DNA-directed RNA polymerase subunit alpha (330 aa).

Residues 1–229 (MKNIKFIKPF…DHFNVLVELS (229 aa)) are alpha N-terminal domain (alpha-NTD). Residues 245-330 (AHNSVLDLEI…HSVEEDKDKH (86 aa)) are alpha C-terminal domain (alpha-CTD).

This sequence belongs to the RNA polymerase alpha chain family. As to quaternary structure, homodimer. The RNAP catalytic core consists of 2 alpha, 1 beta, 1 beta' and 1 omega subunit. When a sigma factor is associated with the core the holoenzyme is formed, which can initiate transcription.

The catalysed reaction is RNA(n) + a ribonucleoside 5'-triphosphate = RNA(n+1) + diphosphate. In terms of biological role, DNA-dependent RNA polymerase catalyzes the transcription of DNA into RNA using the four ribonucleoside triphosphates as substrates. This Onion yellows phytoplasma (strain OY-M) protein is DNA-directed RNA polymerase subunit alpha.